A 248-amino-acid chain; its full sequence is Adenosylcobinamide-GDP ribazoletransferase (248 aa).

The next 5 helical transmembrane spans lie at 30–50 (LAES…CYAL), 54–74 (VLSG…LTAV), 112–132 (FGAL…DAVI), 134–154 (AGSF…MVLA), and 188–208 (AVSA…LAAG).

It belongs to the CobS family. Mg(2+) is required as a cofactor.

Its subcellular location is the cell inner membrane. The enzyme catalyses alpha-ribazole + adenosylcob(III)inamide-GDP = adenosylcob(III)alamin + GMP + H(+). The catalysed reaction is alpha-ribazole 5'-phosphate + adenosylcob(III)inamide-GDP = adenosylcob(III)alamin 5'-phosphate + GMP + H(+). It functions in the pathway cofactor biosynthesis; adenosylcobalamin biosynthesis; adenosylcobalamin from cob(II)yrinate a,c-diamide: step 7/7. In terms of biological role, joins adenosylcobinamide-GDP and alpha-ribazole to generate adenosylcobalamin (Ado-cobalamin). Also synthesizes adenosylcobalamin 5'-phosphate from adenosylcobinamide-GDP and alpha-ribazole 5'-phosphate. The protein is Adenosylcobinamide-GDP ribazoletransferase of Syntrophobacter fumaroxidans (strain DSM 10017 / MPOB).